The following is a 706-amino-acid chain: Phosphatase and actin regulator 4 (706 aa).

The stretch at 42-67 (EVLERKISMRKPREELVKRGLLVEVP) is one RPEL 1 repeat. Disordered stretches follow at residues 65–123 (EVPE…QPCA), 196–380 (VHPR…HIPV), 385–404 (VPMLTLAPPNTEVEKEQSAS), and 459–579 (LKVP…REEW). Positions 106 to 121 (DSTGSRPKSGETTVQP) are enriched in polar residues. The segment covering 200–211 (HLSEKNSEKYRP) has biased composition (basic and acidic residues). Positions 266-276 (DPSTRQQSSVP) are enriched in polar residues. Residues 290–299 (KQPPVPPPKP) show a composition bias toward pro residues. Composition is skewed to acidic residues over residues 463 to 476 (DDDDDDNSLEDESL), 508 to 523 (QEEEEEEEEGVSDTDS), and 531 to 541 (EDDEEEEEEET). Residues 563-579 (GPHDSNPEFPQRSREEW) are compositionally biased toward basic and acidic residues. RPEL repeat units lie at residues 588–613 (SQLNRRLSQRPSAEELEQRNILQKNE) and 625–650 (RRLTRKLSQRPTVAELVERKILRFNE).

It belongs to the phosphatase and actin regulator family. Binds ppp1ca and actin.

Its subcellular location is the cytoplasm. The protein resides in the cell projection. It localises to the lamellipodium. In terms of biological role, regulator of protein phosphatase 1 (PP1) required for neural tube and optic fissure closure, and enteric neural crest cell (ENCCs) migration during development. Acts as an activator of PP1. During neural tube closure, localizes to the ventral neural tube and activates PP1, leading to down-regulate cell proliferation within cranial neural tissue and the neural retina. Also acts as a regulator of migration of enteric neural crest cells (ENCCs) by activating PP1, leading to repression of the integrin signaling through the rho/rock pathway. The protein is Phosphatase and actin regulator 4 (phactr4) of Xenopus tropicalis (Western clawed frog).